A 348-amino-acid polypeptide reads, in one-letter code: RNA 3'-terminal phosphate cyclase (348 aa).

ATP is bound by residues Gln107 and 290-294 (HLADQ). His316 acts as the Tele-AMP-histidine intermediate in catalysis.

This sequence belongs to the RNA 3'-terminal cyclase family. Type 1 subfamily.

The protein resides in the cytoplasm. It carries out the reaction a 3'-end 3'-phospho-ribonucleotide-RNA + ATP = a 3'-end 2',3'-cyclophospho-ribonucleotide-RNA + AMP + diphosphate. Catalyzes the conversion of 3'-phosphate to a 2',3'-cyclic phosphodiester at the end of RNA. The mechanism of action of the enzyme occurs in 3 steps: (A) adenylation of the enzyme by ATP; (B) transfer of adenylate to an RNA-N3'P to produce RNA-N3'PP5'A; (C) and attack of the adjacent 2'-hydroxyl on the 3'-phosphorus in the diester linkage to produce the cyclic end product. The biological role of this enzyme is unknown but it is likely to function in some aspects of cellular RNA processing. This Nostoc punctiforme (strain ATCC 29133 / PCC 73102) protein is RNA 3'-terminal phosphate cyclase.